Reading from the N-terminus, the 345-residue chain is Anthranilate phosphoribosyltransferase (345 aa).

Residues glycine 84, 87 to 88 (GD), threonine 92, 94 to 97 (NIST), 112 to 120 (KHGNRSVSS), and serine 124 each bind 5-phospho-alpha-D-ribose 1-diphosphate. Glycine 84 is a binding site for anthranilate. Serine 96 contacts Mg(2+). Asparagine 115 contacts anthranilate. Arginine 170 is a binding site for anthranilate. 2 residues coordinate Mg(2+): aspartate 229 and glutamate 230.

The protein belongs to the anthranilate phosphoribosyltransferase family. Homodimer. Mg(2+) serves as cofactor.

It catalyses the reaction N-(5-phospho-beta-D-ribosyl)anthranilate + diphosphate = 5-phospho-alpha-D-ribose 1-diphosphate + anthranilate. It participates in amino-acid biosynthesis; L-tryptophan biosynthesis; L-tryptophan from chorismate: step 2/5. In terms of biological role, catalyzes the transfer of the phosphoribosyl group of 5-phosphorylribose-1-pyrophosphate (PRPP) to anthranilate to yield N-(5'-phosphoribosyl)-anthranilate (PRA). This Xanthomonas campestris pv. campestris (strain B100) protein is Anthranilate phosphoribosyltransferase.